Here is an 81-residue protein sequence, read N- to C-terminus: Antitoxin VapB20 (81 aa).

In terms of biological role, antitoxin component of a type II toxin-antitoxin (TA) system. Neutralizes the toxic effect of cognate toxin VapC20. The protein is Antitoxin VapB20 (vapB20) of Mycobacterium tuberculosis (strain CDC 1551 / Oshkosh).